Here is a 1400-residue protein sequence, read N- to C-terminus: RNA polymerase II-associated protein 1 (1400 aa).

Disordered stretches follow at residues 35-54 (KGSR…QDHR), 60-95 (DSLP…EERL), 161-215 (VSDN…GKGL), and 269-310 (REQT…DKLE). Composition is skewed to basic and acidic residues over residues 39–54 (RRGD…QDHR) and 85–95 (LPHDEDPEERL). The segment covering 269–282 (REQTETKATKEQNP) has biased composition (basic and acidic residues). Position 329 is a phosphothreonine (Thr329). Positions 504–539 (PSHDDKEDEDEDEELTKEKVNRKTPEEGSRPPPDLA) are disordered. Acidic residues predominate over residues 509–518 (KEDEDEDEEL). A compositionally biased stretch (basic and acidic residues) spans 519-539 (TKEKVNRKTPEEGSRPPPDLA).

The protein belongs to the RPAP1 family. As to quaternary structure, part of an RNA polymerase II complex that contains POLR2A, POLR2B, POLR2C, POLR2D, POLR2E, POLR2F, POLR2G, POLR2H, POLR2I, POLR2J, POLR2K, POLR2L, RPAP1, FCP1 plus the general transcription factors TFIIB and TFIIF.

The protein resides in the nucleus. In terms of biological role, forms an interface between the RNA polymerase II enzyme and chaperone/scaffolding protein, suggesting that it is required to connect RNA polymerase II to regulators of protein complex formation. Required for interaction of the RNA polymerase II complex with acetylated histone H3. This Rattus norvegicus (Rat) protein is RNA polymerase II-associated protein 1 (Rpap1).